Reading from the N-terminus, the 129-residue chain is Profilin-4 (129 aa).

It belongs to the profilin family. In terms of tissue distribution, expressed in testis, in seminiferous tubules (at protein level). Expressed in spermatocytes and spermatids, but not in spermatogonium.

It is found in the cytoplasm. Functionally, involved in male fertility. Required for manchette development and acrosome biogenesis during spermiogenesis. Binds in vitro to phospholipids, including phosphatidylinositol 3-phosphate (PtdIns(3)P), phosphatidylinositol 4,5-bisphosphate (PtdIns(4,5)P2), phosphatidylinositol 4-phosphate (PtdIns(4)P) and phosphatidic acid (PA). Contrary to other profilin family members, does not bind to actin in vitro. In Rattus norvegicus (Rat), this protein is Profilin-4 (Pfn4).